A 449-amino-acid polypeptide reads, in one-letter code: MGNKPTIAISHLGCEKNRIDSEHMLGLLAEAGYQIDGNEELADYVIVNTCSFIQEARQESVRTLVELAEANKKIIISGCMAQHFQEELLEELPEAVAIVGTGDYQTIVDVVQRVENGERVKAISTTPTFIADESIPRYRTTTEGVAYLRVAEGCDYRCAFCIIPHLRGNQRSRSIESIVTEAQQLADQGVQELILISQITTNYGLDLYGEPKLAELLRELGKVDIPWVRIHYAYPTGLTSPIIAAIRETPNVLPYLDLPLQHSHPQILKTMNRPWQGQVNDSIIERIKEAIPEAVLRTTFIVGFPGETEEHFDHLVNFVQRHEFDHVGVFTFSAEEETPAYQMSPQVPPDIAQERRNLLMEVQQPISIKKNQNCIGQTVPVLIEQENPQTGQLIGRSPRFAPEVDGLVYVQGEAPLNTIVPVQITHADVYDLYGKTNLKNDTAFGETLN.

The 112-residue stretch at 5–116 (PTIAISHLGC…IVDVVQRVEN (112 aa)) folds into the MTTase N-terminal domain. Residues Cys14, Cys50, Cys79, Cys154, Cys158, and Cys161 each coordinate [4Fe-4S] cluster. The region spanning 140–369 (TTTEGVAYLR…MEVQQPISIK (230 aa)) is the Radical SAM core domain. The 67-residue stretch at 372-438 (QNCIGQTVPV…VYDLYGKTNL (67 aa)) folds into the TRAM domain.

The protein belongs to the methylthiotransferase family. RimO subfamily. [4Fe-4S] cluster is required as a cofactor.

It is found in the cytoplasm. It catalyses the reaction L-aspartate(89)-[ribosomal protein uS12]-hydrogen + (sulfur carrier)-SH + AH2 + 2 S-adenosyl-L-methionine = 3-methylsulfanyl-L-aspartate(89)-[ribosomal protein uS12]-hydrogen + (sulfur carrier)-H + 5'-deoxyadenosine + L-methionine + A + S-adenosyl-L-homocysteine + 2 H(+). Catalyzes the methylthiolation of an aspartic acid residue of ribosomal protein uS12. This is Ribosomal protein uS12 methylthiotransferase RimO from Rippkaea orientalis (strain PCC 8801 / RF-1) (Cyanothece sp. (strain PCC 8801)).